Consider the following 503-residue polypeptide: SH2 domain-containing adapter protein B (503 aa).

Disordered stretches follow at residues 1–49 (MAKW…QACS) and 61–81 (CFSA…DLIR). The residue at position 101 (Ser101) is a Phosphoserine. The segment covering 147–157 (AAASSSSSSGS) has biased composition (low complexity). The tract at residues 147–180 (AAASSSSSSGSPHLYRSSSERRPTTPAEVRYISP) is disordered. A Glycyl lysine isopeptide (Lys-Gly) (interchain with G-Cter in SUMO2) cross-link involves residue Lys186. Disordered stretches follow at residues 225–262 (ETGA…SAGY), 292–333 (DTPY…YDQP), and 345–381 (AAQF…IKHG). The segment covering 244–256 (FDAKSDLKSKAGK) has biased composition (basic and acidic residues). Residues Ser301 and Ser311 each carry the phosphoserine modification. Positions 301–311 (SVDSDSESTVS) are enriched in polar residues. Residues 313 to 328 (RLRESKLPQDDDRPAD) show a composition bias toward basic and acidic residues. Phosphoserine is present on Ser382. Residues 404–498 (WYHGAISRSD…AEHLSLLYPV (95 aa)) form the SH2 domain.

In terms of assembly, interacts with phosphorylated 'Tyr-720' of the ligand-activated receptor PDGFRA via its SH2 domain. Interacts with the ligand-activated receptors PDGFRB, FGFR1, KDR/VEGFR2, IL2RB and IL2RG. Interacts with EPS8 and V-SRC. Interacts with GRB2 and GRAP. Interacts with CD3Z. Interacts with tyrosine-phosphorylated LAT upon T-cell antigen receptor activation. Interacts with PLCG1. Interacts with ZAP70, LCP2/SLP-76, VAV1 and GRAP2. Interacts with JAK1 and JAK3. Interacts with PTK2/FAK1. Interacts with CRK/CrKII. Interacts with IRS2. Interacts with PTPN11. Phosphorylated upon PDGFRA, PDGFRB, TCR, IL2 receptor, FGFR1 or VEGFR2 activation. In terms of tissue distribution, expressed in heart, liver, brain and kidney (at protein level).

Its subcellular location is the cytoplasm. The protein resides in the cell membrane. Its function is as follows. Adapter protein which regulates several signal transduction cascades by linking activated receptors to downstream signaling components. May play a role in angiogenesis by regulating FGFR1, VEGFR2 and PDGFR signaling. May also play a role in T-cell antigen receptor/TCR signaling, interleukin-2 signaling, apoptosis and neuronal cells differentiation by mediating basic-FGF and NGF-induced signaling cascades. May also regulate IRS1 and IRS2 signaling in insulin-producing cells. In Mus musculus (Mouse), this protein is SH2 domain-containing adapter protein B (Shb).